We begin with the raw amino-acid sequence, 758 residues long: Protein SPT21 (758 aa).

4 disordered regions span residues 251 to 271 (NNTNSGTVGRRQTNPMPAPKA), 372 to 414 (ININ…AGCR), 438 to 471 (GIEGQKLQQKQKGRKISLTSENDKENIPPQSITS), and 624 to 651 (VIDSDNTKPQAGLINFSTPADQPASDNN). Low complexity predominate over residues 395–408 (VKVKNSNSKNSAKS). At S454 the chain carries Phosphoserine. The span at 626-651 (DSDNTKPQAGLINFSTPADQPASDNN) shows a compositional bias: polar residues.

Required for normal transcription at a number of loci in yeast. This Saccharomyces cerevisiae (strain ATCC 204508 / S288c) (Baker's yeast) protein is Protein SPT21 (SPT21).